The sequence spans 845 residues: Lon protease (845 aa).

One can recognise a Lon N-terminal domain in the interval 45 to 242; the sequence is MPILALRNMI…RLLYLLHKEL (198 aa). Residue 393–400 coordinates ATP; the sequence is GPPGVGKT. Residues 629–811 enclose the Lon proteolytic domain; sequence NGDAGVVIGL…NEVLKEALLE (183 aa). Active-site residues include Ser717 and Lys760.

The protein belongs to the peptidase S16 family. In terms of assembly, homohexamer. Organized in a ring with a central cavity.

It is found in the cytoplasm. It catalyses the reaction Hydrolysis of proteins in presence of ATP.. In terms of biological role, ATP-dependent serine protease that mediates the selective degradation of mutant and abnormal proteins as well as certain short-lived regulatory proteins. Required for cellular homeostasis and for survival from DNA damage and developmental changes induced by stress. Degrades polypeptides processively to yield small peptide fragments that are 5 to 10 amino acids long. Binds to DNA in a double-stranded, site-specific manner. The polypeptide is Lon protease (Porphyromonas gingivalis (strain ATCC 33277 / DSM 20709 / CIP 103683 / JCM 12257 / NCTC 11834 / 2561)).